The following is a 157-amino-acid chain: Putative glutathione-dependent formaldehyde-activating enzyme (157 aa).

Positions 3–134 (LEGSCHCGAV…WVEIESREQD (132 aa)) constitute a CENP-V/GFA domain. The Zn(2+) site is built by C7, C9, C27, C29, C32, C79, and C82.

The protein belongs to the Gfa family. The cofactor is Zn(2+).

It catalyses the reaction S-(hydroxymethyl)glutathione = glutathione + formaldehyde. Its pathway is one-carbon metabolism; formaldehyde degradation; formate from formaldehyde (glutathione route): step 1/3. In terms of biological role, catalyzes the condensation of formaldehyde and glutathione to S-hydroxymethylglutathione. The chain is Putative glutathione-dependent formaldehyde-activating enzyme from Halomonas elongata (strain ATCC 33173 / DSM 2581 / NBRC 15536 / NCIMB 2198 / 1H9).